Here is a 286-residue protein sequence, read N- to C-terminus: Meteorin-like protein (286 aa).

Positions 1–21 are cleaved as a signal peptide; the sequence is MLSPFLAYLLSVVLLCRIARS. Intrachain disulfides connect C28–C51, C84–C120, C165–C235, C168–C259, and C178–C281.

Belongs to the meteorin family.

It is found in the secreted. In terms of biological role, hormone induced following exercise or cold exposure that promotes energy expenditure. Induced either in the skeletal muscle after exercise or in adipose tissue following cold exposure and is present in the circulation. Able to stimulate energy expenditure associated with the browning of the white fat depots and improves glucose tolerance. This chain is Meteorin-like protein (metrnl), found in Danio rerio (Zebrafish).